A 611-amino-acid chain; its full sequence is Glutamine--fructose-6-phosphate aminotransferase [isomerizing] (611 aa).

Residue Cys2 is the Nucleophile; for GATase activity of the active site. A Glutamine amidotransferase type-2 domain is found at 2–219 (CGIVGAVAER…EGDIAEIRRD (218 aa)). SIS domains follow at residues 287–427 (AAEL…VKGS) and 460–601 (VAEL…VDQP). Lys606 serves as the catalytic For Fru-6P isomerization activity.

Homodimer.

It localises to the cytoplasm. It carries out the reaction D-fructose 6-phosphate + L-glutamine = D-glucosamine 6-phosphate + L-glutamate. Functionally, catalyzes the first step in hexosamine metabolism, converting fructose-6P into glucosamine-6P using glutamine as a nitrogen source. This Pseudomonas syringae pv. tomato (strain ATCC BAA-871 / DC3000) protein is Glutamine--fructose-6-phosphate aminotransferase [isomerizing].